The following is a 336-amino-acid chain: Aspartate--ammonia ligase (336 aa).

The protein belongs to the class-II aminoacyl-tRNA synthetase family. AsnA subfamily.

The protein localises to the cytoplasm. The catalysed reaction is L-aspartate + NH4(+) + ATP = L-asparagine + AMP + diphosphate + H(+). Its pathway is amino-acid biosynthesis; L-asparagine biosynthesis; L-asparagine from L-aspartate (ammonia route): step 1/1. The chain is Aspartate--ammonia ligase from Lactobacillus acidophilus (strain ATCC 700396 / NCK56 / N2 / NCFM).